The primary structure comprises 277 residues: Ribosomal RNA small subunit methyltransferase G (277 aa).

S-adenosyl-L-methionine contacts are provided by residues Gly-128, Phe-133, 188 to 189 (SE), and Arg-198.

Belongs to the methyltransferase superfamily. RNA methyltransferase RsmG family.

It is found in the cytoplasm. The enzyme catalyses guanosine(527) in 16S rRNA + S-adenosyl-L-methionine = N(7)-methylguanosine(527) in 16S rRNA + S-adenosyl-L-homocysteine. Its function is as follows. Specifically methylates the N7 position of guanine in position 527 of 16S rRNA. The polypeptide is Ribosomal RNA small subunit methyltransferase G (Nitrobacter winogradskyi (strain ATCC 25391 / DSM 10237 / CIP 104748 / NCIMB 11846 / Nb-255)).